Reading from the N-terminus, the 463-residue chain is Asparagine--tRNA ligase (463 aa).

Belongs to the class-II aminoacyl-tRNA synthetase family. In terms of assembly, homodimer.

Its subcellular location is the cytoplasm. It catalyses the reaction tRNA(Asn) + L-asparagine + ATP = L-asparaginyl-tRNA(Asn) + AMP + diphosphate + H(+). This chain is Asparagine--tRNA ligase, found in Alkaliphilus oremlandii (strain OhILAs) (Clostridium oremlandii (strain OhILAs)).